The primary structure comprises 110 residues: Large ribosomal subunit protein uL24 (110 aa).

Belongs to the universal ribosomal protein uL24 family. Part of the 50S ribosomal subunit.

In terms of biological role, one of two assembly initiator proteins, it binds directly to the 5'-end of the 23S rRNA, where it nucleates assembly of the 50S subunit. Its function is as follows. One of the proteins that surrounds the polypeptide exit tunnel on the outside of the subunit. In Ureaplasma parvum serovar 3 (strain ATCC 27815 / 27 / NCTC 11736), this protein is Large ribosomal subunit protein uL24.